Reading from the N-terminus, the 189-residue chain is Peptidyl-tRNA hydrolase (189 aa).

Residue tyrosine 15 coordinates tRNA. The Proton acceptor role is filled by histidine 20. Positions 66, 68, and 114 each coordinate tRNA.

This sequence belongs to the PTH family. Monomer.

The protein resides in the cytoplasm. It carries out the reaction an N-acyl-L-alpha-aminoacyl-tRNA + H2O = an N-acyl-L-amino acid + a tRNA + H(+). Its function is as follows. Hydrolyzes ribosome-free peptidyl-tRNAs (with 1 or more amino acids incorporated), which drop off the ribosome during protein synthesis, or as a result of ribosome stalling. Functionally, catalyzes the release of premature peptidyl moieties from peptidyl-tRNA molecules trapped in stalled 50S ribosomal subunits, and thus maintains levels of free tRNAs and 50S ribosomes. This Streptococcus pneumoniae (strain Taiwan19F-14) protein is Peptidyl-tRNA hydrolase.